Reading from the N-terminus, the 588-residue chain is ATP-dependent lipid A-core flippase (588 aa).

6 helical membrane passes run 23–43 (FWPV…IDAG), 56–76 (FITI…IGIT), 141–161 (DALT…TVMM), 162–182 (VICW…GIIV), 257–277 (LVIA…STVI), and 278–298 (TISA…IKPM). An ABC transmembrane type-1 domain is found at 28 to 310 (LLGVLANILY…LTTLNATIQR (283 aa)). In terms of domain architecture, ABC transporter spans 342-576 (IEFKHVYHAY…DGHYAQLYKV (235 aa)). 375–382 (GHSGSGKT) provides a ligand contact to ATP.

It belongs to the ABC transporter superfamily. Lipid exporter (TC 3.A.1.106) family. As to quaternary structure, homodimer.

It localises to the cell inner membrane. The catalysed reaction is ATP + H2O + lipid A-core oligosaccharideSide 1 = ADP + phosphate + lipid A-core oligosaccharideSide 2.. In terms of biological role, involved in lipopolysaccharide (LPS) biosynthesis. Translocates lipid A-core from the inner to the outer leaflet of the inner membrane. Transmembrane domains (TMD) form a pore in the inner membrane and the ATP-binding domain (NBD) is responsible for energy generation. The polypeptide is ATP-dependent lipid A-core flippase (Legionella pneumophila (strain Paris)).